An 874-amino-acid polypeptide reads, in one-letter code: DNA mismatch repair protein MutS (874 aa).

Basic and acidic residues predominate over residues 1 to 12 (MSNDRPLTHSEA). The interval 1-20 (MSNDRPLTHSEAESSALRLG) is disordered. An ATP-binding site is contributed by 661–668 (GPNASGKS). The interval 854 to 874 (RKSSMGDPPTAPEINQGELPF) is disordered.

It belongs to the DNA mismatch repair MutS family.

In terms of biological role, this protein is involved in the repair of mismatches in DNA. It is possible that it carries out the mismatch recognition step. This protein has a weak ATPase activity. The protein is DNA mismatch repair protein MutS of Thermosynechococcus vestitus (strain NIES-2133 / IAM M-273 / BP-1).